Consider the following 340-residue polypeptide: Branched-chain-amino-acid aminotransferase (340 aa).

Lys-187 carries the N6-(pyridoxal phosphate)lysine modification.

Belongs to the class-IV pyridoxal-phosphate-dependent aminotransferase family. Requires pyridoxal 5'-phosphate as cofactor.

The catalysed reaction is L-leucine + 2-oxoglutarate = 4-methyl-2-oxopentanoate + L-glutamate. It catalyses the reaction L-isoleucine + 2-oxoglutarate = (S)-3-methyl-2-oxopentanoate + L-glutamate. The enzyme catalyses L-valine + 2-oxoglutarate = 3-methyl-2-oxobutanoate + L-glutamate. The protein operates within amino-acid biosynthesis; L-isoleucine biosynthesis; L-isoleucine from 2-oxobutanoate: step 4/4. It participates in amino-acid biosynthesis; L-leucine biosynthesis; L-leucine from 3-methyl-2-oxobutanoate: step 4/4. It functions in the pathway amino-acid biosynthesis; L-valine biosynthesis; L-valine from pyruvate: step 4/4. Acts on leucine, isoleucine and valine. This chain is Branched-chain-amino-acid aminotransferase (ilvE), found in Helicobacter pylori (strain J99 / ATCC 700824) (Campylobacter pylori J99).